The chain runs to 168 residues: Troponin I, cardiac muscle (168 aa).

The segment covering 128 to 147 has biased composition (basic and acidic residues); that stretch reads VRKDDAEKESREVGDWRKNV. The segment at 128–168 is disordered; sequence VRKDDAEKESREVGDWRKNVDALSGMEGRKKKFEAPGGGQG.

It belongs to the troponin I family. In terms of assembly, binds to actin and tropomyosin.

Its function is as follows. Troponin I is the inhibitory subunit of troponin, the thin filament regulatory complex which confers calcium-sensitivity to striated muscle actomyosin ATPase activity. The chain is Troponin I, cardiac muscle (TNNI3) from Gallus gallus (Chicken).